Reading from the N-terminus, the 359-residue chain is Dihydroorotate dehydrogenase (quinone) (359 aa).

FMN-binding positions include 61 to 65 (AGYDK) and Thr85. Lys65 contributes to the substrate binding site. Position 110–114 (110–114 (NRLGF)) interacts with substrate. Residues Asn139 and Asn170 each coordinate FMN. A substrate-binding site is contributed by Asn170. Ser173 (nucleophile) is an active-site residue. Asn175 lines the substrate pocket. FMN-binding residues include Lys211 and Ser239. 240–241 (NT) provides a ligand contact to substrate. Residues Gly262, Gly291, and 312 to 313 (YT) each bind FMN.

Belongs to the dihydroorotate dehydrogenase family. Type 2 subfamily. Monomer. The cofactor is FMN.

It is found in the cell membrane. It catalyses the reaction (S)-dihydroorotate + a quinone = orotate + a quinol. The protein operates within pyrimidine metabolism; UMP biosynthesis via de novo pathway; orotate from (S)-dihydroorotate (quinone route): step 1/1. Catalyzes the conversion of dihydroorotate to orotate with quinone as electron acceptor. The chain is Dihydroorotate dehydrogenase (quinone) from Mesorhizobium japonicum (strain LMG 29417 / CECT 9101 / MAFF 303099) (Mesorhizobium loti (strain MAFF 303099)).